The primary structure comprises 495 residues: UDP-glycosyltransferase 73C13 (495 aa).

H24 functions as the Proton acceptor in the catalytic mechanism. H24 provides a ligand contact to an anthocyanidin. Catalysis depends on D129, which acts as the Charge relay. UDP-alpha-D-glucose-binding residues include A356, Q358, H373, W376, N377, S378, and E381. A396 contacts an anthocyanidin. Positions 397 and 398 each coordinate UDP-alpha-D-glucose.

Belongs to the UDP-glycosyltransferase family.

It carries out the reaction oleanolate + UDP-alpha-D-glucose = oleanolate 3-O-beta-D-glucoside + UDP + H(+). Functionally, catalyzes the transfer of a glucose (Glc) moiety from UDP-Glc to the C-3 position of the oleanane sapogenins oleanolate and hederagenin, and to the C-28 carboxylic group of the lupane sapogenin betulinate. The monoglucosylated hederagenin 3-O-beta-D-glucoside is a feeding deterrent of the yellow-striped flea beetle (Phyllotreta nemorum). In Barbarea vulgaris (Yellow rocket), this protein is UDP-glycosyltransferase 73C13.